The chain runs to 312 residues: MNYEGHLKGHRGWVTSLACPQQAGSYIKVVSTSRDGTAISWKANPDRHSVDSDYGLPSHRLEGHTGFVSCVSLAHATDYALTASWDRSIRMWDLRNGQCQRKFLKHTKDVLAVAFSPDDRLIVSAGRDNVIRVWNVAGECMHEFLRDGHEDWVSSICFSPSLEHPIVVSGSWDNTIKVWNVNGGKCERTLKGHSNYVSTVTVSPDGSLCASGGKDGAALLWDLSTGEQLFKINVESPINQIAFSPNRFWMCVATERSLSVYDLESKAVIAELTPDGAKPSECISIAWSADGNTLYSGHKDNLIRVWSISDAE.

WD repeat units follow at residues 9-42, 63-93, 105-135, 148-180, 192-222, 233-262, and 279-307; these read GHRG…ISWK, GHTG…RMWD, KHTK…RVWN, GHED…KVWN, GHSN…LLWD, NVES…SVYD, and PSEC…RVWS.

The protein belongs to the WD repeat G protein beta family. Ribosomal protein RACK1 subfamily.

In Leishmania chagasi, this protein is Small ribosomal subunit protein RACK1.